The following is a 361-amino-acid chain: Cytochrome P450 family protein EryCII (361 aa).

Belongs to the cytochrome P450 family. Heterotetramer composed of EryCII and EryCIII.

It participates in antibiotic biosynthesis; erythromycin biosynthesis. Its function is as follows. Involved in the erythromycin biosynthesis pathway. Acts by forming a complex and stabilizing the desosaminyl transferase EryCIII. The chain is Cytochrome P450 family protein EryCII (eryCII) from Saccharopolyspora erythraea (strain ATCC 11635 / DSM 40517 / JCM 4748 / NBRC 13426 / NCIMB 8594 / NRRL 2338).